Reading from the N-terminus, the 789-residue chain is Ent-kaur-16-ene synthase, chloroplastic (789 aa).

Mg(2+) contacts are provided by Asp-536, Asp-540, Asn-680, Ser-684, and Glu-688. A DDXXD motif motif is present at residues 536 to 540 (DDFYD).

Belongs to the terpene synthase family. Mg(2+) serves as cofactor. In terms of processing, the N-terminus is blocked. In terms of tissue distribution, abundant in most tissues. Present in low amounts in mature cotyledons.

The protein resides in the plastid. Its subcellular location is the chloroplast. It carries out the reaction ent-copalyl diphosphate = ent-kaur-16-ene + diphosphate. Its pathway is plant hormone biosynthesis; gibberellin biosynthesis. Its function is as follows. Catalyzes the conversion of ent-copalyl diphosphate to the gibberellin precursor ent-kaur-16-ene. The chain is Ent-kaur-16-ene synthase, chloroplastic from Cucurbita maxima (Pumpkin).